We begin with the raw amino-acid sequence, 140 residues long: Large ribosomal subunit protein uL16 (140 aa).

This sequence belongs to the universal ribosomal protein uL16 family. Part of the 50S ribosomal subunit.

Its function is as follows. Binds 23S rRNA and is also seen to make contacts with the A and possibly P site tRNAs. In Syntrophus aciditrophicus (strain SB), this protein is Large ribosomal subunit protein uL16.